The sequence spans 103 residues: Histone H4 (103 aa).

Positions 1 to 14 are enriched in gly residues; it reads MSGRGKGGKGLGKG. The tract at residues 1-20 is disordered; sequence MSGRGKGGKGLGKGGAKRHR. Serine 2 is subject to N-acetylserine. N6-acetyl-N6-methyllysine; alternate occurs at positions 6 and 13. An N6-acetyllysine modification is found at lysine 17. Residues 17 to 21 mediate DNA binding; the sequence is KRHRK. Lysine 21 carries the post-translational modification N6-methyllysine.

The protein belongs to the histone H4 family. As to quaternary structure, the nucleosome is a histone octamer containing two molecules each of H2A, H2B, H3 and H4 assembled in one H3-H4 heterotetramer and two H2A-H2B heterodimers. The octamer wraps approximately 147 bp of DNA.

It is found in the nucleus. The protein localises to the chromosome. Core component of nucleosome. Nucleosomes wrap and compact DNA into chromatin, limiting DNA accessibility to the cellular machineries which require DNA as a template. Histones thereby play a central role in transcription regulation, DNA repair, DNA replication and chromosomal stability. DNA accessibility is regulated via a complex set of post-translational modifications of histones, also called histone code, and nucleosome remodeling. This chain is Histone H4 (H4DEKL), found in Dendronephthya klunzingeri (Klunzinger's soft coral).